The sequence spans 195 residues: Cytochrome c biogenesis ATP-binding export protein CcmA (195 aa).

One can recognise an ABC transporter domain in the interval 1 to 195; that stretch reads MLSLHQLQFN…IKSAQILQLV (195 aa). Residue 33-40 coordinates ATP; it reads GANGSGKS.

It belongs to the ABC transporter superfamily. CcmA exporter (TC 3.A.1.107) family. As to quaternary structure, the complex is composed of two ATP-binding proteins (CcmA) and two transmembrane proteins (CcmB).

Its subcellular location is the cell inner membrane. The enzyme catalyses heme b(in) + ATP + H2O = heme b(out) + ADP + phosphate + H(+). Part of the ABC transporter complex CcmAB involved in the biogenesis of c-type cytochromes; once thought to export heme, this seems not to be the case, but its exact role is uncertain. Responsible for energy coupling to the transport system. The polypeptide is Cytochrome c biogenesis ATP-binding export protein CcmA (Rickettsia felis (strain ATCC VR-1525 / URRWXCal2) (Rickettsia azadi)).